The chain runs to 447 residues: MTTRKYFGTDGIRGRVGQFPITPEFMLKLGWAAGMAFRKMGACRILVGKDTRISGYMFESALEAGLSAAGADVLLLGPMPTPAIAYLTRTFHAEAGIVISASHNPHYDNGIKFFSGQGTKLPDEIEMMIEELLDAPMTVAESENLGKVSRINDAAGRYIEFCKSSVPTSTDFAGLKVVIDCAHGATYKVAPNVFRELGAQVVVLSAQPDGLNINKNCGSTHMEALQAAVVAEHADMGIGFDGDGDRVLMVDHTGTIVDGDELLYIIARDLHERGRLQGGVVGTLMSNLGLELALAEQSIPFVRANVGDRYVIAELLERNWQIGGENSGHIVCFQHATTGDAIIASLQVILALRRSGISLAEARLKLRKCPQILINVRFAGSGVDPVSHPSVQQACARVTEQMAGRGRVLLRKSGTEPLVRVMVEGEDETQVRSYAEELAKLVAEVCA.

Ser102 (phosphoserine intermediate) is an active-site residue. The Mg(2+) site is built by Ser102, Asp241, Asp243, and Asp245. The residue at position 102 (Ser102) is a Phosphoserine.

This sequence belongs to the phosphohexose mutase family. The cofactor is Mg(2+). Post-translationally, activated by phosphorylation.

The catalysed reaction is alpha-D-glucosamine 1-phosphate = D-glucosamine 6-phosphate. In terms of biological role, catalyzes the conversion of glucosamine-6-phosphate to glucosamine-1-phosphate. The protein is Phosphoglucosamine mutase of Pseudomonas savastanoi pv. phaseolicola (strain 1448A / Race 6) (Pseudomonas syringae pv. phaseolicola (strain 1448A / Race 6)).